The chain runs to 710 residues: MTKRDRTIYSCDACRSRKIKCNRQTPCASCHKSKRDCVYTVSRQRDAQITNRKLDKKTYHQISAIEKKISALEGKKGLLQVETINFNKSFTDQTPLVELQSLFPYLLLSKQDPGCVLVRHHCHHLLEKDPRYFEYSQLLADLSLTKRHHLTARAKALLGEAYIPSPQEGHTIDQLKHVLSLNPNFRFAGNFADPLTSFFSLIPPAWANKQLVDTFFQHIYPVIPIIDETDFNTSINRVLGPQIDGHYINSFPSIGSADDLPFLALFLLVLRISYMYTPGACPVSYDTLRAAETIMKEFDITKTHSLTALQAEIMLRFYKIVAPESYTQSNYVQVSVGVLIQNCYSLALHRDPEYIGEHNPKQQHLRRKIWHLLLRMEVIDSAIFQTILSSNPDASDTKLPQLIDQAPPMEQSIVKHIWRSTDLFVSLRKLVEINSKTSEDTPLETVLELLVEVETKLQAFLATIDSEASTVFYNDLVIFSVNFLLVYMYYSLYLFKGPTPLGNKYLLKSAQILFVDLARTRSTSLFLAYFNLNYIHLVLMITNFLRMRVDCIIHRHLRAQDSSVQDLQCCRYFLKIIFFSHVKELGNYSSSHKYAWQMRKVYLTLAKIMERSSDVLISNDPELVKSAAVDIPVKEINKLLEQYINFKGFTPTTLFDPTDNELIDEMQHENLWNAMENIEYSEKVYSGWIDAIKNVPSNWDWDYWDFLKIS.

The zn(2)-C6 fungal-type DNA-binding region spans 11–37 (CDACRSRKIKCNRQTPCASCHKSKRDC). Transmembrane regions (helical) follow at residues 475–495 (DLVIFSVNFLLVYMYYSLYLF) and 525–545 (LFLAYFNLNYIHLVLMITNFL).

It is found in the nucleus. It localises to the membrane. In terms of biological role, transcription factor that controls the expression of CDR1, the major multidrug efflux pump. Required for yeast cell adherence to silicone substrate and plays a role in virulence. The chain is multidrug resistance regulator 2 from Candida albicans (strain SC5314 / ATCC MYA-2876) (Yeast).